The sequence spans 101 residues: MYAVIRTGGKQYRVAQGDRVKIEKLAGDVGGKVNFDVLLVGGEGEAKVGTPTLAGVTVEGEIVAQDKHKKVIHFRKKKEGWTKKRGHRQPYTEVLITTVRA.

Belongs to the bacterial ribosomal protein bL21 family. As to quaternary structure, part of the 50S ribosomal subunit. Contacts protein L20.

This protein binds to 23S rRNA in the presence of protein L20. This is Large ribosomal subunit protein bL21 from Anaeromyxobacter dehalogenans (strain 2CP-1 / ATCC BAA-258).